The chain runs to 108 residues: UPF0145 protein HDEF_1024 (108 aa).

The protein belongs to the UPF0145 family.

The protein is UPF0145 protein HDEF_1024 of Hamiltonella defensa subsp. Acyrthosiphon pisum (strain 5AT).